The primary structure comprises 231 residues: Uracil phosphoribosyltransferase (231 aa).

Residue 38–42 (KGLVR) participates in GTP binding. Residues Arg87, Arg112, and 140–148 (DPMIATGST) contribute to the 5-phospho-alpha-D-ribose 1-diphosphate site. Uracil contacts are provided by residues Ile203 and 208–210 (GDA). Asp209 serves as a coordination point for 5-phospho-alpha-D-ribose 1-diphosphate.

The protein belongs to the UPRTase family. Mg(2+) serves as cofactor.

It carries out the reaction UMP + diphosphate = 5-phospho-alpha-D-ribose 1-diphosphate + uracil. The protein operates within pyrimidine metabolism; UMP biosynthesis via salvage pathway; UMP from uracil: step 1/1. Its activity is regulated as follows. Allosterically activated by GTP. Catalyzes the conversion of uracil and 5-phospho-alpha-D-ribose 1-diphosphate (PRPP) to UMP and diphosphate. The sequence is that of Uracil phosphoribosyltransferase from Methanococcus maripaludis (strain C5 / ATCC BAA-1333).